We begin with the raw amino-acid sequence, 269 residues long: Type III pantothenate kinase (269 aa).

Residue 9 to 16 (DVGNTSVK) coordinates ATP. Residues Tyr-106 and 113–116 (GADR) each bind substrate. Residue Asp-115 is the Proton acceptor of the active site. Residue Asp-137 coordinates K(+). Position 140 (Thr-140) interacts with ATP. Residue Thr-193 coordinates substrate.

It belongs to the type III pantothenate kinase family. Homodimer. The cofactor is NH4(+). K(+) serves as cofactor.

Its subcellular location is the cytoplasm. The catalysed reaction is (R)-pantothenate + ATP = (R)-4'-phosphopantothenate + ADP + H(+). The protein operates within cofactor biosynthesis; coenzyme A biosynthesis; CoA from (R)-pantothenate: step 1/5. In terms of biological role, catalyzes the phosphorylation of pantothenate (Pan), the first step in CoA biosynthesis. This chain is Type III pantothenate kinase, found in Lawsonia intracellularis (strain PHE/MN1-00).